The chain runs to 173 residues: Gonadotropin inhibitory hormone peptides (173 aa).

Positions 1–26 (MEIISTQKFILLTLATVAFLTPHGAC) are cleaved as a signal peptide. Residues 27-82 (LDELMKSSLESREDDDDKYYETKDSILEEKQRSLNFEEMKDWGSKNFMKVNTPTVN) constitute a propeptide that is removed on maturation. Phe95 carries the phenylalanine amide modification. Positions 98 to 103 (SNPEER) are excised as a propeptide. Phenylalanine amide is present on Phe115. The propeptide occupies 118–140 (AFGESLSRRAPNLSNRSGRSPLA). Phe154 bears the Phenylalanine amide mark. A propeptide spanning residues 157 to 173 (SVPISLSQGVQESEPGM) is cleaved from the precursor.

It belongs to the FARP (FMRFamide related peptide) family. Specifically expressed in the diencephalon.

The protein localises to the secreted. In terms of biological role, hypothalamic factor, responsible for the negative regulation of gonadotropin secretion. The protein is Gonadotropin inhibitory hormone peptides (GNIH) of Coturnix japonica (Japanese quail).